Consider the following 940-residue polypeptide: Isoleucine--tRNA ligase (940 aa).

The 'HIGH' region signature appears at 58-68 (PYANGSIHIGH). Position 564 (Glu564) interacts with L-isoleucyl-5'-AMP. Residues 605 to 609 (KMSKS) carry the 'KMSKS' region motif. Lys608 contacts ATP. Cys903, Cys906, Cys923, and Cys926 together coordinate Zn(2+).

It belongs to the class-I aminoacyl-tRNA synthetase family. IleS type 1 subfamily. Monomer. Zn(2+) serves as cofactor.

The protein resides in the cytoplasm. The catalysed reaction is tRNA(Ile) + L-isoleucine + ATP = L-isoleucyl-tRNA(Ile) + AMP + diphosphate. Functionally, catalyzes the attachment of isoleucine to tRNA(Ile). As IleRS can inadvertently accommodate and process structurally similar amino acids such as valine, to avoid such errors it has two additional distinct tRNA(Ile)-dependent editing activities. One activity is designated as 'pretransfer' editing and involves the hydrolysis of activated Val-AMP. The other activity is designated 'posttransfer' editing and involves deacylation of mischarged Val-tRNA(Ile). The chain is Isoleucine--tRNA ligase from Shewanella sp. (strain W3-18-1).